The primary structure comprises 235 residues: Phosphoribosylformylglycinamidine synthase subunit PurQ (235 aa).

The region spanning 4-234 is the Glutamine amidotransferase type-1 domain; sequence GILVFPGTNC…VQHLTGRVIR (231 aa). The Nucleophile role is filled by cysteine 86. Active-site residues include histidine 203 and glutamate 205.

As to quaternary structure, part of the FGAM synthase complex composed of 1 PurL, 1 PurQ and 2 PurS subunits.

It is found in the cytoplasm. It carries out the reaction N(2)-formyl-N(1)-(5-phospho-beta-D-ribosyl)glycinamide + L-glutamine + ATP + H2O = 2-formamido-N(1)-(5-O-phospho-beta-D-ribosyl)acetamidine + L-glutamate + ADP + phosphate + H(+). It catalyses the reaction L-glutamine + H2O = L-glutamate + NH4(+). Its pathway is purine metabolism; IMP biosynthesis via de novo pathway; 5-amino-1-(5-phospho-D-ribosyl)imidazole from N(2)-formyl-N(1)-(5-phospho-D-ribosyl)glycinamide: step 1/2. In terms of biological role, part of the phosphoribosylformylglycinamidine synthase complex involved in the purines biosynthetic pathway. Catalyzes the ATP-dependent conversion of formylglycinamide ribonucleotide (FGAR) and glutamine to yield formylglycinamidine ribonucleotide (FGAM) and glutamate. The FGAM synthase complex is composed of three subunits. PurQ produces an ammonia molecule by converting glutamine to glutamate. PurL transfers the ammonia molecule to FGAR to form FGAM in an ATP-dependent manner. PurS interacts with PurQ and PurL and is thought to assist in the transfer of the ammonia molecule from PurQ to PurL. The chain is Phosphoribosylformylglycinamidine synthase subunit PurQ from Symbiobacterium thermophilum (strain DSM 24528 / JCM 14929 / IAM 14863 / T).